The following is a 316-amino-acid chain: Lipoyl synthase (316 aa).

Over residues 1-15 the composition is skewed to basic and acidic residues; sequence MKARNESMSKGEYKT. The disordered stretch occupies residues 1-33; that stretch reads MKARNESMSKGEYKTKSLKNRPDPTQPKLKKPS. Positions 64, 69, 75, 90, 94, 97, and 304 each coordinate [4Fe-4S] cluster. A Radical SAM core domain is found at 76–293; that stretch reads FGHGTATFMI…EQAGMEMGFT (218 aa).

Belongs to the radical SAM superfamily. Lipoyl synthase family. [4Fe-4S] cluster is required as a cofactor.

The protein resides in the cytoplasm. The catalysed reaction is [[Fe-S] cluster scaffold protein carrying a second [4Fe-4S](2+) cluster] + N(6)-octanoyl-L-lysyl-[protein] + 2 oxidized [2Fe-2S]-[ferredoxin] + 2 S-adenosyl-L-methionine + 4 H(+) = [[Fe-S] cluster scaffold protein] + N(6)-[(R)-dihydrolipoyl]-L-lysyl-[protein] + 4 Fe(3+) + 2 hydrogen sulfide + 2 5'-deoxyadenosine + 2 L-methionine + 2 reduced [2Fe-2S]-[ferredoxin]. Its pathway is protein modification; protein lipoylation via endogenous pathway; protein N(6)-(lipoyl)lysine from octanoyl-[acyl-carrier-protein]: step 2/2. Functionally, catalyzes the radical-mediated insertion of two sulfur atoms into the C-6 and C-8 positions of the octanoyl moiety bound to the lipoyl domains of lipoate-dependent enzymes, thereby converting the octanoylated domains into lipoylated derivatives. This Hydrogenovibrio crunogenus (strain DSM 25203 / XCL-2) (Thiomicrospira crunogena) protein is Lipoyl synthase.